Consider the following 240-residue polypeptide: 1-(5-phosphoribosyl)-5-[(5-phosphoribosylamino)methylideneamino] imidazole-4-carboxamide isomerase (240 aa).

Asp8 acts as the Proton acceptor in catalysis. The active-site Proton donor is the Asp129.

It belongs to the HisA/HisF family.

Its subcellular location is the cytoplasm. The enzyme catalyses 1-(5-phospho-beta-D-ribosyl)-5-[(5-phospho-beta-D-ribosylamino)methylideneamino]imidazole-4-carboxamide = 5-[(5-phospho-1-deoxy-D-ribulos-1-ylimino)methylamino]-1-(5-phospho-beta-D-ribosyl)imidazole-4-carboxamide. Its pathway is amino-acid biosynthesis; L-histidine biosynthesis; L-histidine from 5-phospho-alpha-D-ribose 1-diphosphate: step 4/9. This is 1-(5-phosphoribosyl)-5-[(5-phosphoribosylamino)methylideneamino] imidazole-4-carboxamide isomerase from Caldanaerobacter subterraneus subsp. tengcongensis (strain DSM 15242 / JCM 11007 / NBRC 100824 / MB4) (Thermoanaerobacter tengcongensis).